The chain runs to 139 residues: ATP synthase epsilon chain (139 aa).

The protein belongs to the ATPase epsilon chain family. In terms of assembly, F-type ATPases have 2 components, CF(1) - the catalytic core - and CF(0) - the membrane proton channel. CF(1) has five subunits: alpha(3), beta(3), gamma(1), delta(1), epsilon(1). CF(0) has three main subunits: a, b and c.

The protein localises to the cell membrane. Its function is as follows. Produces ATP from ADP in the presence of a proton gradient across the membrane. The polypeptide is ATP synthase epsilon chain (Pediococcus pentosaceus (strain ATCC 25745 / CCUG 21536 / LMG 10740 / 183-1w)).